The chain runs to 419 residues: UDP-N-acetylglucosamine 1-carboxyvinyltransferase (419 aa).

K22 to N23 provides a ligand contact to phosphoenolpyruvate. A UDP-N-acetyl-alpha-D-glucosamine-binding site is contributed by R91. The active-site Proton donor is the C115. C115 is subject to 2-(S-cysteinyl)pyruvic acid O-phosphothioketal. UDP-N-acetyl-alpha-D-glucosamine contacts are provided by residues R120 to L124, K160 to V163, D305, and V327.

The protein belongs to the EPSP synthase family. MurA subfamily.

Its subcellular location is the cytoplasm. The enzyme catalyses phosphoenolpyruvate + UDP-N-acetyl-alpha-D-glucosamine = UDP-N-acetyl-3-O-(1-carboxyvinyl)-alpha-D-glucosamine + phosphate. It participates in cell wall biogenesis; peptidoglycan biosynthesis. In terms of biological role, cell wall formation. Adds enolpyruvyl to UDP-N-acetylglucosamine. The chain is UDP-N-acetylglucosamine 1-carboxyvinyltransferase from Escherichia coli (strain K12 / MC4100 / BW2952).